A 378-amino-acid polypeptide reads, in one-letter code: Phosphatidyl-myo-inositol mannosyltransferase (378 aa).

2 residues coordinate GDP-alpha-D-mannose: Tyr-9 and Gly-16. Residues Gln-18, 62-63 (YN), and Arg-68 contribute to the a 1,2-diacyl-sn-glycero-3-phospho-(1D-myo-inositol) site. GDP-alpha-D-mannose contacts are provided by residues Arg-196, 201–202 (RK), 251–253 (VDD), Lys-256, 274–278 (ESFGI), and Glu-282.

This sequence belongs to the glycosyltransferase group 1 family. As to quaternary structure, monomer. Mg(2+) serves as cofactor.

The protein resides in the cell membrane. It carries out the reaction a 1,2-diacyl-sn-glycero-3-phospho-(1D-myo-inositol) + GDP-alpha-D-mannose = a 1,2-diacyl-sn-glycero-3-phospho-[alpha-D-mannopyranosyl-(1&lt;-&gt;6)-D-myo-inositol] + GDP + H(+). It participates in phospholipid metabolism; phosphatidylinositol metabolism. Functionally, involved in the biosynthesis of phosphatidyl-myo-inositol mannosides (PIM) which are early precursors in the biosynthesis of lipomannans (LM) and lipoarabinomannans (LAM). Catalyzes the addition of a mannosyl residue from GDP-D-mannose (GDP-Man) to the position 2 of the carrier lipid phosphatidyl-myo-inositol (PI) to generate a phosphatidyl-myo-inositol bearing an alpha-1,2-linked mannose residue (PIM1). The polypeptide is Phosphatidyl-myo-inositol mannosyltransferase (Mycobacterium bovis (strain ATCC BAA-935 / AF2122/97)).